Consider the following 91-residue polypeptide: Cytochrome b-c1 complex subunit 10, mitochondrial (91 aa).

Over 1 to 34 (MFATSILRSAYPAYKSPYGPKYQYQPHIDGITPK) the chain is Mitochondrial matrix. Residues 35-58 (QLVRILPTAAAWTGVALFAVVYYA) form a helical membrane-spanning segment. Residues 59 to 91 (SGIPRLRRDVLQRIPYLGERYFVNEIPASDNPF) lie on the Mitochondrial intermembrane side of the membrane.

The protein belongs to the UQCR11/QCR10 family. In terms of assembly, component of the ubiquinol-cytochrome c oxidoreductase (cytochrome b-c1 complex, complex III, CIII), a multisubunit enzyme composed of 10 subunits. The complex is composed of 3 respiratory subunits cytochrome b (cob), cytochrome c1 (cyt-1) and Rieske protein (fes-1), 2 core protein subunits pep and ucr-1, and 5 low-molecular weight protein subunits qcr6, qcr7, qcr8, qcr9 and probably NCU16844/qcr10. The complex exists as an obligatory dimer and forms supercomplexes (SCs) in the inner mitochondrial membrane with NADH-ubiquinone oxidoreductase (complex I, CI) and cytochrome c oxidase (complex IV, CIV), resulting in different assemblies (supercomplexes SCI(1)III(2), SCIII(2)IV(1) and SCIII(2)IV(2) as well as higher order I(x)III(y)IV(z) megacomplexes).

The protein localises to the mitochondrion inner membrane. Functionally, component of the ubiquinol-cytochrome c oxidoreductase, a multisubunit transmembrane complex that is part of the mitochondrial electron transport chain which drives oxidative phosphorylation. The respiratory chain contains 3 multisubunit complexes succinate dehydrogenase (complex II, CII), ubiquinol-cytochrome c oxidoreductase (cytochrome b-c1 complex, complex III, CIII) and cytochrome c oxidase (complex IV, CIV), that cooperate to transfer electrons derived from NADH and succinate to molecular oxygen, creating an electrochemical gradient over the inner membrane that drives transmembrane transport and the ATP synthase. The cytochrome b-c1 complex catalyzes electron transfer from ubiquinol to cytochrome c, linking this redox reaction to translocation of protons across the mitochondrial inner membrane, with protons being carried across the membrane as hydrogens on the quinol. In the process called Q cycle, 2 protons are consumed from the matrix, 4 protons are released into the intermembrane space and 2 electrons are passed to cytochrome c. This Neurospora crassa (strain ATCC 24698 / 74-OR23-1A / CBS 708.71 / DSM 1257 / FGSC 987) protein is Cytochrome b-c1 complex subunit 10, mitochondrial.